The following is a 138-amino-acid chain: Single-stranded DNA-binding protein 3 (138 aa).

One can recognise an SSB domain in the interval 1-104 (MINNIVLVGR…VVAENFQLLE (104 aa)). Positions 105-121 (SRNSQQQTNQSGNSSNS) are enriched in low complexity. Positions 105–138 (SRNSQQQTNQSGNSSNSYFGNANKMDISDDDLPF) are disordered. Residues 133–138 (DDDLPF) carry the Important for interaction with partner proteins motif.

As to quaternary structure, homotetramer.

Functionally, plays an important role in DNA replication, recombination and repair. Binds to ssDNA and to an array of partner proteins to recruit them to their sites of action during DNA metabolism. The sequence is that of Single-stranded DNA-binding protein 3 (ssb3) from Streptococcus agalactiae serotype V (strain ATCC BAA-611 / 2603 V/R).